Reading from the N-terminus, the 560-residue chain is Chaperonin GroEL 2 (560 aa).

ATP-binding positions include 29-32, 86-90, G413, and D492; these read TIGP and DGTTT. A disordered region spans residues 520-542; sequence DKPEPPSAPGAEGGDPMGGMGGM. The span at 530 to 542 shows a compositional bias: gly residues; the sequence is AEGGDPMGGMGGM.

It belongs to the chaperonin (HSP60) family. In terms of assembly, forms a cylinder of 14 subunits composed of two heptameric rings stacked back-to-back. Interacts with the co-chaperonin GroES.

It is found in the cytoplasm. It catalyses the reaction ATP + H2O + a folded polypeptide = ADP + phosphate + an unfolded polypeptide.. Functionally, together with its co-chaperonin GroES, plays an essential role in assisting protein folding. The GroEL-GroES system forms a nano-cage that allows encapsulation of the non-native substrate proteins and provides a physical environment optimized to promote and accelerate protein folding. In Prochlorococcus marinus (strain NATL2A), this protein is Chaperonin GroEL 2.